The sequence spans 153 residues: Transcriptional repressor NrdR (153 aa).

Residues 3–34 (CPFCHNQDTRVIDSRAAEEGTAIRRRRSCPAC) fold into a zinc finger. Residues 46 to 136 (LMVTKRSGAT…VYRSFESLED (91 aa)) form the ATP-cone domain.

It belongs to the NrdR family. Zn(2+) is required as a cofactor.

In terms of biological role, negatively regulates transcription of bacterial ribonucleotide reductase nrd genes and operons by binding to NrdR-boxes. In Thermobifida fusca (strain YX), this protein is Transcriptional repressor NrdR.